Reading from the N-terminus, the 432-residue chain is Adenylosuccinate synthetase (432 aa).

Residues 13-19 and 41-43 contribute to the GTP site; these read GDEGKGK and GHT. The Proton acceptor role is filled by D14. Residues D14 and G41 each coordinate Mg(2+). IMP is bound by residues 14–17, 39–42, T130, R144, Q225, T240, and R304; these read DEGK and NAGH. H42 serves as the catalytic Proton donor. A substrate-binding site is contributed by 300 to 306; the sequence is ATTGRKR. GTP-binding positions include R306, 332-334, and 415-417; these read KLD and STG.

It belongs to the adenylosuccinate synthetase family. Homodimer. Mg(2+) is required as a cofactor.

It is found in the cytoplasm. The enzyme catalyses IMP + L-aspartate + GTP = N(6)-(1,2-dicarboxyethyl)-AMP + GDP + phosphate + 2 H(+). It functions in the pathway purine metabolism; AMP biosynthesis via de novo pathway; AMP from IMP: step 1/2. Plays an important role in the de novo pathway of purine nucleotide biosynthesis. Catalyzes the first committed step in the biosynthesis of AMP from IMP. This chain is Adenylosuccinate synthetase, found in Pseudoalteromonas atlantica (strain T6c / ATCC BAA-1087).